The chain runs to 296 residues: Fructose-bisphosphate aldolase class 1 (296 aa).

Glutamate 175 functions as the Proton acceptor in the catalytic mechanism. Lysine 212 serves as the catalytic Schiff-base intermediate with dihydroxyacetone-P.

It belongs to the class I fructose-bisphosphate aldolase family.

It catalyses the reaction beta-D-fructose 1,6-bisphosphate = D-glyceraldehyde 3-phosphate + dihydroxyacetone phosphate. Its pathway is carbohydrate degradation; glycolysis; D-glyceraldehyde 3-phosphate and glycerone phosphate from D-glucose: step 4/4. The protein is Fructose-bisphosphate aldolase class 1 (fda) of Staphylococcus carnosus (strain TM300).